The primary structure comprises 65 residues: pH-response transcription factor pacC/RIM101 (65 aa).

Residues 16–40 (LTCQWNSCRTTTVKRDHITSHIRVH) form a C2H2-type 1 zinc finger. The segment at 46–65 (HKCEFCGKSFKRPQDLKKHV) adopts a C2H2-type 2; degenerate zinc-finger fold.

Belongs to the pacC/RIM101 family.

It localises to the nucleus. Functionally, transcription factor that mediates regulation of both acid- and alkaline-expressed genes in response to ambient pH. At alkaline ambient pH, activates transcription of alkaline-expressed genes (including pac1 itself) and represses transcription of acid-expressed genes. The sequence is that of pH-response transcription factor pacC/RIM101 (pac1) from Colletotrichum gloeosporioides (Anthracnose fungus).